A 1058-amino-acid chain; its full sequence is Probable plasma membrane ATPase (1058 aa).

Polar residues predominate over residues 1-29 (MDNNQIPKNSPESSAINSAESSPKSNVSS). A disordered region spans residues 1–123 (MDNNQIPKNS…SSSGKKEEDY (123 aa)). Over 1–212 (MDNNQIPKNS…DVKRYPILEF (212 aa)) the chain is Cytoplasmic. The segment covering 31–40 (VLHENHHKEQ) has biased composition (basic and acidic residues). Positions 41–66 (QQLQQQLQQEQQQQQLPTTPQSEPTQ) are enriched in low complexity. Over residues 96-111 (SLKTISGYPSSKNTEA) the composition is skewed to polar residues. Residues 213 to 232 (LYFMWNPLSWTMEVAAIVSI) form a helical membrane-spanning segment. Over 233-237 (ALLDW) the chain is Extracellular. Residues 238–258 (VDFILICALLLLNATIGFIEE) form a helical membrane-spanning segment. Residues 259–387 (NTAGNAVEAL…GHLQVILRNI (129 aa)) lie on the Cytoplasmic side of the membrane. A helical transmembrane segment spans residues 388 to 407 (GLFCISFIAIWVLVELLVDF). Residues 408–425 (LGYDGYCHGVGGGRCLPL) are Extracellular-facing. A helical membrane pass occupies residues 426–447 (NNALVLLVGGIPIAMPTVLSVT). The Cytoplasmic segment spans residues 448 to 783 (MAIGATQLSK…SSRKIFQRMR (336 aa)). The active-site 4-aspartylphosphate intermediate is D480. Positions 728 and 732 each coordinate Mg(2+). Residues 784–805 (NYVIYSVAATVRICTTFGILTV) traverse the membrane as a helical segment. Residues 806–810 (AWNFK) are Extracellular-facing. A helical transmembrane segment spans residues 811–833 (FPTIATVIIAILNDGTMLTISKD). Residues 834-849 (RVRARNEPDQWNLFEV) are Cytoplasmic-facing. Residues 850–870 (FTMALCYGFYLVGSTIVFFAI) form a helical membrane-spanning segment. Residues 871-889 (IHDGTWFHDAINLRILTDN) lie on the Extracellular side of the membrane. The helical transmembrane segment at 890-910 (ELRGLIYLQVSISGLATIFVS) threads the bilayer. The Cytoplasmic portion of the chain corresponds to 911-922 (RSQGFSYFERPG). The helical transmembrane segment at 923–943 (NLVIFAFVMSQIVATFIGVYG) threads the bilayer. At 944–967 (FRGYPHDSFSDNPDYPVHGTNFQG) the chain is on the extracellular side. Residues 968 to 988 (CGWGWAVCAWIWCFLWYIPMD) traverse the membrane as a helical segment. The Cytoplasmic segment spans residues 989-1058 (FIKLGVTYIL…HKSVVTDNKV (70 aa)).

Belongs to the cation transport ATPase (P-type) (TC 3.A.3) family. Type IIIA subfamily.

The protein localises to the cell membrane. The catalysed reaction is ATP + H2O + H(+)(in) = ADP + phosphate + 2 H(+)(out). With respect to regulation, acid pH levels increase its ATPase activity. Functionally, P-type plasma membrane H+-ATPase (proton pump). The proton gradient it generates drives the active transport of nutrients by H(+) symport. The resulting external acidification and/or internal alkinization may mediate growth responses. The polypeptide is Probable plasma membrane ATPase (patB) (Dictyostelium discoideum (Social amoeba)).